Reading from the N-terminus, the 419-residue chain is Hydrolase LUC6 (419 aa).

Residue Ser-238 is part of the active site.

It belongs to the AB hydrolase superfamily. FUS2 hydrolase family.

The protein operates within mycotoxin biosynthesis. In terms of biological role, hydrolase; part of the gene cluster that mediates the biosynthesis of the mycotoxin lucilactaene and the lucilactaene-related compound NG-391 that act as cell cycle inhibitors with potent growth inhibitory activity against malarial parasites, moderate growth inhibitory activity against cancer cells, and no activity against bacteria and fungi. Within the pathway, LUC6 may catalyze the 2-pyrrolidone ring formation to form prelucilactaene C from prelucilactaene B, followed by C-15 hydroxylation by the same enzyme to give prelucilactaene D, epoxydation to yield prelucilactaene E, and finally cyclization to yield prelucilactaene F. The pathway begins with the hybrid PKS-NRPS synthetase LUC5 which is responsible for the condensation of one acetyl-coenzyme A (CoA) unit with six malonyl-CoA units and the amide linkage of the arising heptaketide and homoserine, subsequently releasing the first intermediate prelucilactaene B. Both the cytochrome P450 monooxygenase LUC2 and the hydrolase LUC6 function in parallel in modification of prelucilactaene B. LUC6 may catalyze the 2-pyrrolidone ring formation to form prelucilactaene C from prelucilactaene B, followed by C-15 hydroxylation by the same enzyme to give prelucilactaene D, which is then converted to prelucilactaene E by epoxidation, and finally to prelucilactaene F by cyclization. Prelucilactane D, prelucilactaene E, and prelucilactaene F can be converted to dihydrolucilactaene, NG391, and lucilactaene, respectively, via C-20 methyl group hydroxylation by the cytochrome P450 monooxygenase LUC2. However, LUC2, unlike FUS8 in fusarin C biosynthesis, is not enough for the full oxidation of the C-20 methyl group into carboxylic acid, which is a prerequisite for the final methylation step. The aldehyde dehydrogenase LUC3 is involved in the biosynthesis by further oxidation of the C-20 alcoholic analog prelucilactaene G into a carboxylic derivative. This unidentified carboxylic derivative may be converted to demethyllucilactaene. As the last step, the methyltransferase LUC1 methylates the hydroxyl group at C-21 of demethyllucilactaene to generate lucilactaene. In Fusarium sp, this protein is Hydrolase LUC6.